Consider the following 218-residue polypeptide: Oxygen regulatory protein NreC (218 aa).

The 118-residue stretch at 2 to 119 (KIVIADDHAV…QLILAVRTVY (118 aa)) folds into the Response regulatory domain. The residue at position 53 (Asp53) is a 4-aspartylphosphate. The HTH luxR-type domain maps to 149-214 (SSDPFKILSK…ELVEYALKKK (66 aa)). A DNA-binding region (H-T-H motif) is located at residues 173–192 (NKDIAEKLFVSVKTVEAHKT).

Phosphorylated by NreB.

The protein localises to the cytoplasm. In terms of biological role, member of the two-component regulatory system NreB/NreC involved in the control of dissimilatory nitrate/nitrite reduction in response to oxygen. Phosphorylated NreC binds to a GC-rich palindromic sequence at the promoters of the nitrate (narGHJI) and nitrite (nir) reductase operons, as well as the putative nitrate transporter gene narT, and activates their expression. In Staphylococcus epidermidis (strain ATCC 35984 / DSM 28319 / BCRC 17069 / CCUG 31568 / BM 3577 / RP62A), this protein is Oxygen regulatory protein NreC (nreC).